We begin with the raw amino-acid sequence, 116 residues long: Iron-sulfur cluster insertion protein ErpA (116 aa).

Positions 44, 108, and 110 each coordinate iron-sulfur cluster.

Belongs to the HesB/IscA family. As to quaternary structure, homodimer. Requires iron-sulfur cluster as cofactor.

Required for insertion of 4Fe-4S clusters for at least IspG. In Pseudomonas putida (strain ATCC 47054 / DSM 6125 / CFBP 8728 / NCIMB 11950 / KT2440), this protein is Iron-sulfur cluster insertion protein ErpA.